The following is a 348-amino-acid chain: Erythronate-4-phosphate dehydrogenase (348 aa).

Substrate-binding residues include Thr-46 and Thr-67. Asp-147 lines the NAD(+) pocket. The active site involves Arg-209. Residue Asp-233 participates in NAD(+) binding. The active site involves Glu-238. The active-site Proton donor is His-255. Gly-258 is a binding site for NAD(+). Position 259 (Tyr-259) interacts with substrate.

Belongs to the D-isomer specific 2-hydroxyacid dehydrogenase family. PdxB subfamily. Homodimer.

Its subcellular location is the cytoplasm. The enzyme catalyses 4-phospho-D-erythronate + NAD(+) = (R)-3-hydroxy-2-oxo-4-phosphooxybutanoate + NADH + H(+). It functions in the pathway cofactor biosynthesis; pyridoxine 5'-phosphate biosynthesis; pyridoxine 5'-phosphate from D-erythrose 4-phosphate: step 2/5. Functionally, catalyzes the oxidation of erythronate-4-phosphate to 3-hydroxy-2-oxo-4-phosphonooxybutanoate. In Bacteroides fragilis (strain YCH46), this protein is Erythronate-4-phosphate dehydrogenase.